The following is a 214-amino-acid chain: STS14 protein (214 aa).

The first 19 residues, 1-19 (MFVLSTAMACLVYIYIYIY), serve as a signal peptide directing secretion. Repeat copies occupy residues 13–14 (YI), 15–16 (YI), and 17–18 (YI). Positions 13–18 (YIYIYI) are 3 X 2 AA tandem repeats of Y-I. In terms of domain architecture, SCP spans 80-200 (LDAHNKARSE…YEGPATLTVC (121 aa)).

The protein belongs to the CRISP family. Highly expressed in the stigma and stylar cortex throughout pistil development. Not expressed in other organs.

Its function is as follows. May protect the outer tissues of the pistil from pathogen attack. This chain is STS14 protein (STS14), found in Solanum tuberosum (Potato).